Reading from the N-terminus, the 397-residue chain is MKFNKVKLVIHACVLLFIIISIALIFHRLQTKTHSIDPIHKETKLSDNEKYLVDRNKEKVAPSKLKEVYNSKDPKYKKIDKYLQSSLFNGSVAIYENGKLKMSKGYGYQDFEKGIKNTPNTMFLIGSAQKFSTGLLLKQLEEEHKININDPVSKYLPWFKTSKPIPLKDLMLHQSGLYKYKSSKDYKNLDQAVKAIQKRGIDPKKYKKHMYNDGNYLVLAKVIEEVTGKSYAENYYTKIGDPLKLQHTAFYDEQPFKKYLAKGYAYNSTGLSFLRPNILDQYYGAGNLYMTPTDMGKLITQIQQYKLFSPKITNPLLHEFGTKKYPDEYRYGFYAKPTLNRLNGGFFGQVFTVYYNDKYVVVLALNVKGNNEVRIKHIYNDILKQNKPYNTKGVIVQ.

Positions 1 to 23 (MKFNKVKLVIHACVLLFIIISIA) are cleaved as a signal peptide.

It is found in the cell membrane. It catalyses the reaction [(4-D-Ala)-(2-GlcNAc)-Rib-ol-P]n-[Gro-P]m-beta-D-ManNAc-(1-&gt;4)-alpha-D-GlcNAc-P-peptidoglycan + n H2O = [(2-GlcNAc)-Rib-ol-P]n-[Gro-P]m-beta-D-ManNAc-(1-&gt;4)-alpha-D-GlcNAc-P-peptidoglycan + n D-alanine.. Catalyzes the liberation of D-alanyl moieties present on wall teichoic acid (WTA) and lipoteichoic acid (LTA). Affects the methicillin resistance level and autolysis in the presence of Triton X-100 as well as the cell wall structure. This is Teichoic acid D-alanine hydrolase (fmtA) from Staphylococcus aureus (strain NCTC 8325 / PS 47).